The following is a 133-amino-acid chain: uncharacterized protein (133 aa).

The protein belongs to the mimivirus L15/L51/R83 family.

This is an uncharacterized protein from Acanthamoeba polyphaga (Amoeba).